The chain runs to 318 residues: Acetyl-coenzyme A carboxylase carboxyl transferase subunit alpha (318 aa).

Positions 34–295 (DIEDQISQLR…KQAIKKDLSE (262 aa)) constitute a CoA carboxyltransferase C-terminal domain.

Belongs to the AccA family. In terms of assembly, acetyl-CoA carboxylase is a heterohexamer composed of biotin carboxyl carrier protein (AccB), biotin carboxylase (AccC) and two subunits each of ACCase subunit alpha (AccA) and ACCase subunit beta (AccD).

Its subcellular location is the cytoplasm. The catalysed reaction is N(6)-carboxybiotinyl-L-lysyl-[protein] + acetyl-CoA = N(6)-biotinyl-L-lysyl-[protein] + malonyl-CoA. It participates in lipid metabolism; malonyl-CoA biosynthesis; malonyl-CoA from acetyl-CoA: step 1/1. Component of the acetyl coenzyme A carboxylase (ACC) complex. First, biotin carboxylase catalyzes the carboxylation of biotin on its carrier protein (BCCP) and then the CO(2) group is transferred by the carboxyltransferase to acetyl-CoA to form malonyl-CoA. The protein is Acetyl-coenzyme A carboxylase carboxyl transferase subunit alpha of Colwellia psychrerythraea (strain 34H / ATCC BAA-681) (Vibrio psychroerythus).